Here is a 330-residue protein sequence, read N- to C-terminus: Serine/threonine-protein phosphatase PP1-alpha catalytic subunit (330 aa).

Ser-2 is modified (N-acetylserine). Phosphoserine occurs at positions 2 and 22. Mn(2+) contacts are provided by Asp-64, His-66, Asp-92, and Asn-124. The active-site Proton donor is His-125. 2 residues coordinate Mn(2+): His-173 and His-248. Lys-305 bears the N6-acetyllysine mark. Phosphotyrosine is present on Tyr-306. A disordered region spans residues 306–330 (YGQFSGLNPGGRPITPPRNSAKAKK). The residue at position 320 (Thr-320) is a Phosphothreonine. Ser-325 is subject to Phosphoserine.

This sequence belongs to the PPP phosphatase family. PP-1 subfamily. In terms of assembly, PP1 comprises a catalytic subunit, PPP1CA, PPP1CB or PPP1CC, which is folded into its native form by inhibitor 2 and glycogen synthetase kinase 3, and then complexed to one or several targeting or regulatory subunits. PPP1R12A, PPP1R12B and PPP1R12C mediate binding to myosin. PPP1R3A (in skeletal muscle), PPP1R3B (in liver), PPP1R3C, PPP1R3D and PPP1R3F (in brain) mediate binding to glycogen. Interacts with PPP1R15A and PPP1R15B; the interactions mediate binding to EIF2S1. Part of a complex containing PPP1R15B, PP1 and NCK1/2. Interacts with PPP1R9A, PPP1R9B and PPP1R7. Interacts with YLPM1. Forms a complex with ILF2, ILF3, YLPM1, KHDRBS1, RBMX and NCOA5. Interacts with NOM1 and PPP1R8. Interacts with PPP1R16B. Interacts with RPSA only in the presence of PPP1R16B. Component of the PNUTS-PP1 phosphatase complex, composed of PPP1R10/PNUTS, TOX4, WDR82, and PPP1CA or PPP1CB or PPP1CC. Interacts with PPP1R10/PNUTS and PPP1R8. Interacts with WDR82 in the presence of PPP1R10/PNUTS. Interacts with PPP1R39. transition from mitosis into interphase. Interacts with TRIM28; the interaction dephosphorylates TRIM28 on 'Ser-824' and forms a complex at the p21 promoter site. Interacts with NEK2. Interacts with PHACTR4; which acts as an activator of PP1 activity. Interacts with FER; this promotes phosphorylation at Thr-320. Interacts with BTBD10. Interacts with KCTD20. Interacts with FOXP3. Interacts with CENPA. Interacts with ATG16L1. Found in a complex with PPP1CA, PPP1CC, SHC1 and PEAK1. Interacts with tensin TNS1. Interacts with SAXO4, PPP1R21, PPP1R26, PPP1R27, PPP1R35, PPP1R36, PPP1R37, SH3RF2, ELFN1 and ELFN2. Interacts with TPRN; the interaction results in inhibition of PPC1A phosphatase activity. Interacts with SKA1 (via C-terminus); the interaction is direct and required for the recruitment of PP1 to the kinetochore. Interacts with the KNL1 complex subunit KNL1; the interaction is direct and mutually exclusive with KNL1 binding to microtubules. Component of the SHOC2-MRAS-PP1c (SMP) complex consisting of SHOC2, GTP-bound M-Ras/MRAS and the catalytic subunit of protein phosphatase 1 (either PPP1CA, PPP1CB or PPP1CC). SHOC2 and PP1c preferably bind M-Ras/MRAS, but they also bind K-Ras/KRAS, N-Ras/NRAS and H-Ras/HRAS; these interactions are GTP-dependent and both SHOC2 and PP1c are required to form a stable complex. Interacts with SHOC2 in the absence of Ras GTPases. Mn(2+) is required as a cofactor. In terms of processing, phosphorylated. Dephosphorylated at Thr-320 in the presence of ionizing radiation.

It localises to the cytoplasm. It is found in the nucleus. The protein resides in the nucleoplasm. Its subcellular location is the nucleolus. It catalyses the reaction O-phospho-L-seryl-[protein] + H2O = L-seryl-[protein] + phosphate. The enzyme catalyses O-phospho-L-threonyl-[protein] + H2O = L-threonyl-[protein] + phosphate. Its function is as follows. Protein phosphatase that associates with over 200 regulatory proteins to form highly specific holoenzymes which dephosphorylate hundreds of biological targets. Protein phosphatase 1 (PP1) is essential for cell division, transcription elongation, and participates in the regulation of glycogen metabolism, muscle contractility and protein synthesis. Involved in regulation of ionic conductances and long-term synaptic plasticity. May play an important role in dephosphorylating substrates such as the postsynaptic density-associated Ca(2+)/calmodulin dependent protein kinase II. Catalytic component of the PNUTS-PP1 protein phosphatase complex, a protein phosphatase 1 (PP1) complex that promotes RNA polymerase II transcription pause-release, allowing transcription elongation: the PNUTS-PP1 complex mediates the release of RNA polymerase II from promoter-proximal region of genes by catalyzing dephosphorylation of proteins involved in transcription, such as AFF4, CDK9, MEPCE, INTS12, NCBP1, POLR2M/GDOWN1 and SUPT6H. The PNUTS-PP1 complex also regulates transcription termination by mediating dephosphorylation of SUPT5H in termination zones downstream of poly(A) sites, thereby promoting deceleration of RNA polymerase II transcription. PNUTS-PP1 complex is also involved in the response to replication stress by mediating dephosphorylation of POLR2A at 'Ser-5' of the CTD, promoting RNA polymerase II degradation. PNUTS-PP1 also plays a role in the control of chromatin structure and cell cycle progression during the transition from mitosis into interphase. Regulates NEK2 function in terms of kinase activity and centrosome number and splitting, both in the presence and absence of radiation-induced DNA damage. Regulator of neural tube and optic fissure closure, and enteric neural crest cell (ENCCs) migration during development. In balance with CSNK1D and CSNK1E, determines the circadian period length, through the regulation of the speed and rhythmicity of PER1 and PER2 phosphorylation. May dephosphorylate CSNK1D and CSNK1E. Dephosphorylates the 'Ser-418' residue of FOXP3 in regulatory T-cells (Treg) from patients with rheumatoid arthritis, thereby inactivating FOXP3 and rendering Treg cells functionally defective. Dephosphorylates CENPA. Dephosphorylates the 'Ser-139' residue of ATG16L1 causing dissociation of ATG12-ATG5-ATG16L1 complex, thereby inhibiting autophagy. Together with PPP1CC (PP1-gamma subunit), dephosphorylates IFIH1/MDA5 and RIG-I leading to their activation and a functional innate immune response. Core component of the SHOC2-MRAS-PP1c (SMP) holophosphatase complex that regulates the MAPK pathway activation. The SMP complex specifically dephosphorylates the inhibitory phosphorylation at 'Ser-259' of RAF1 kinase, 'Ser-365' of BRAF kinase and 'Ser-214' of ARAF kinase, stimulating their kinase activities. The SMP complex enhances the dephosphorylation activity and substrate specificity of PP1c. In Canis lupus familiaris (Dog), this protein is Serine/threonine-protein phosphatase PP1-alpha catalytic subunit (PPP1CA).